The following is a 280-amino-acid chain: MESTHEYCIMNTTPNIHAMIVAAGRGSRFGASIAKQYTLLQGQTLLQHSVARLAESNYIDRCLLVVAQDDSTAQTLSFALPIYYAIGGTERWQSVQAGVEAMINAGADESDLVVIHDAARPAVPTHDIDAVIQAAMLEPYGAILATPVADTLKQSYIASNTLSTPAYEAPLSLQQLNTQPELANSQSGYDTLHTYAQKTIDRSHMWQAQTPQVFRLGQLQQVLNYVTKHNLAITDEASAFEHLELPIRLVTGSRQNIKLTYPDDIILLTAILKAQFASIS.

The protein belongs to the IspD/TarI cytidylyltransferase family. IspD subfamily.

It carries out the reaction 2-C-methyl-D-erythritol 4-phosphate + CTP + H(+) = 4-CDP-2-C-methyl-D-erythritol + diphosphate. It functions in the pathway isoprenoid biosynthesis; isopentenyl diphosphate biosynthesis via DXP pathway; isopentenyl diphosphate from 1-deoxy-D-xylulose 5-phosphate: step 2/6. Functionally, catalyzes the formation of 4-diphosphocytidyl-2-C-methyl-D-erythritol from CTP and 2-C-methyl-D-erythritol 4-phosphate (MEP). In Psychrobacter cryohalolentis (strain ATCC BAA-1226 / DSM 17306 / VKM B-2378 / K5), this protein is 2-C-methyl-D-erythritol 4-phosphate cytidylyltransferase.